The primary structure comprises 193 residues: dTTP/UTP pyrophosphatase (193 aa).

The Proton acceptor role is filled by Asp-68.

The protein belongs to the Maf family. YhdE subfamily. The cofactor is a divalent metal cation.

Its subcellular location is the cytoplasm. The enzyme catalyses dTTP + H2O = dTMP + diphosphate + H(+). It carries out the reaction UTP + H2O = UMP + diphosphate + H(+). In terms of biological role, nucleoside triphosphate pyrophosphatase that hydrolyzes dTTP and UTP. May have a dual role in cell division arrest and in preventing the incorporation of modified nucleotides into cellular nucleic acids. The protein is dTTP/UTP pyrophosphatase of Ruegeria sp. (strain TM1040) (Silicibacter sp.).